Consider the following 197-residue polypeptide: Crossover junction endodeoxyribonuclease RuvC (197 aa).

Catalysis depends on residues Asp-7, Glu-68, and Asp-141. Mg(2+) contacts are provided by Asp-7, Glu-68, and Asp-141. 2 stretches are compositionally biased toward low complexity: residues 165-181 (AAPA…TPAR) and 188-197 (APARRPAGAS). The tract at residues 165–197 (AAPAAPVSRPAPATPARRSPRPAAPARRPAGAS) is disordered.

The protein belongs to the RuvC family. Homodimer which binds Holliday junction (HJ) DNA. The HJ becomes 2-fold symmetrical on binding to RuvC with unstacked arms; it has a different conformation from HJ DNA in complex with RuvA. In the full resolvosome a probable DNA-RuvA(4)-RuvB(12)-RuvC(2) complex forms which resolves the HJ. It depends on Mg(2+) as a cofactor.

It is found in the cytoplasm. It carries out the reaction Endonucleolytic cleavage at a junction such as a reciprocal single-stranded crossover between two homologous DNA duplexes (Holliday junction).. The RuvA-RuvB-RuvC complex processes Holliday junction (HJ) DNA during genetic recombination and DNA repair. Endonuclease that resolves HJ intermediates. Cleaves cruciform DNA by making single-stranded nicks across the HJ at symmetrical positions within the homologous arms, yielding a 5'-phosphate and a 3'-hydroxyl group; requires a central core of homology in the junction. The consensus cleavage sequence is 5'-(A/T)TT(C/G)-3'. Cleavage occurs on the 3'-side of the TT dinucleotide at the point of strand exchange. HJ branch migration catalyzed by RuvA-RuvB allows RuvC to scan DNA until it finds its consensus sequence, where it cleaves and resolves the cruciform DNA. The chain is Crossover junction endodeoxyribonuclease RuvC from Frankia alni (strain DSM 45986 / CECT 9034 / ACN14a).